A 268-amino-acid chain; its full sequence is MVFFNLLEAAFLGLIEGLTEFIPVSSTGHLLLIGHFLGFESTGKTFEVLIQLGAILAILSVYSAKLARIATDFPRDARTRRFVLGVLVAFLPAAVIGALAHGFIKGVLFETPMLVCIMLIVGGFILLWVDQLNLRPRYHNVMDYPLPICLAIGFIQCLAMIPGVSRSGSTIVGSLLLGADKRSAAEFSFFLAMPTMAGAFAYDLFKSRNILSFNDGALIVVGFIMAFISGVFVVRHLLDYVSRHGFALFGWWRLIVGSAGMAALIIWG.

The next 8 helical transmembrane spans lie at phenylalanine 11–isoleucine 33, phenylalanine 46–leucine 66, leucine 84–isoleucine 104, valine 107–leucine 127, tyrosine 144–valine 164, alanine 185–phenylalanine 205, phenylalanine 213–valine 233, and phenylalanine 246–isoleucine 266.

It belongs to the UppP family.

It is found in the cell inner membrane. It carries out the reaction di-trans,octa-cis-undecaprenyl diphosphate + H2O = di-trans,octa-cis-undecaprenyl phosphate + phosphate + H(+). Its function is as follows. Catalyzes the dephosphorylation of undecaprenyl diphosphate (UPP). Confers resistance to bacitracin. In Brucella suis (strain ATCC 23445 / NCTC 10510), this protein is Undecaprenyl-diphosphatase.